The sequence spans 454 residues: MYTYMEYLQKCFYKSTNWNEDNIFSNITATSQAILEFPIPNGFKIDSSSKTTDYSASSFTLSNNHQINGSLAYLYSSVPLKNTMGTKDVSLQDAIAGFRIIEPMVRLQPKFNNKAPHSKSSLLYGRMYFPGSALEAMIIKRISENTQLLIKCVNNPHLSKNGTMIVYLQNNTAKYSREFIYSTNESLIGLRCLYNLGTPTSSSTVSSFNPRTIPKFDNSVVSIGTELWFATRSMSPGLSGALRYSTRSTSTGKPLTMTLAINPILGHISSTYTVKTSVASTFCSRYDFNVFSYASNLSLGFELYSYANKKRSDFYNHEIYSSSEENKYLKQHPELQKHHRVPIRAYKHHDNRTIINPIHNLDNVYHINPTLLSTTSGSGHTSETVTTAFQNLVNESDFSSVLKFSTSLNDKVVKILWEGRLRDFLVSTGVKLSLNPVTNTPEFNKLGISFSYAL.

This sequence belongs to the MDM10 family. Component of the ER-mitochondria encounter structure (ERMES) or MDM complex, composed of MMM1, MDM10, MDM12 and MDM34. Associates with the mitochondrial outer membrane sorting assembly machinery SAM(core) complex.

The protein localises to the mitochondrion outer membrane. Its function is as follows. Component of the ERMES/MDM complex, which serves as a molecular tether to connect the endoplasmic reticulum and mitochondria. Components of this complex are involved in the control of mitochondrial shape and protein biogenesis and may function in phospholipid exchange. MDM10 is involved in the late assembly steps of the general translocase of the mitochondrial outer membrane (TOM complex). Functions in the TOM40-specific route of the assembly of outer membrane beta-barrel proteins, including the association of TOM40 with the receptor TOM22 and small TOM proteins. Can associate with the SAM(core) complex as well as the MDM12-MMM1 complex, both involved in late steps of the major beta-barrel assembly pathway, that is responsible for biogenesis of all outer membrane beta-barrel proteins. May act as a switch that shuttles between both complexes and channels precursor proteins into the TOM40-specific pathway. Plays a role in mitochondrial morphology and in the inheritance of mitochondria. The chain is Mitochondrial distribution and morphology protein 10 from Candida tropicalis (strain ATCC MYA-3404 / T1) (Yeast).